The chain runs to 226 residues: Small ribosomal subunit protein uS2c (226 aa).

The protein belongs to the universal ribosomal protein uS2 family.

The protein resides in the plastid. It localises to the chloroplast. This Ostreococcus tauri protein is Small ribosomal subunit protein uS2c (rps2).